An 843-amino-acid polypeptide reads, in one-letter code: Protein P (843 aa).

Residues 1–177 (MPLSYQHFRK…FCGSPYSWEQ (177 aa)) form a terminal protein domain (TP) region. A spacer region spans residues 178 to 346 (DLQHGRLVFQ…YCLYHIVNLI (169 aa)). The tract at residues 219-250 (RKSRLGPQPAQGQLAGRQQGGSGSIRARVHPS) is disordered. Residues 223–235 (LGPQPAQGQLAGR) are compositionally biased toward low complexity. Positions 347–690 (EDWGPCTEHG…YLNLYPVARQ (344 aa)) are polymerase/reverse transcriptase domain (RT). A Reverse transcriptase domain is found at 357-600 (EHRIRTPRTP…YSLNFMGYVI (244 aa)). Aspartate 429, aspartate 551, and aspartate 552 together coordinate Mg(2+).

The protein belongs to the hepadnaviridae P protein family.

It carries out the reaction DNA(n) + a 2'-deoxyribonucleoside 5'-triphosphate = DNA(n+1) + diphosphate. It catalyses the reaction Endonucleolytic cleavage to 5'-phosphomonoester.. Activated by host HSP70 and HSP40 in vitro to be able to bind the epsilon loop of the pgRNA. Because deletion of the RNase H region renders the protein partly chaperone-independent, the chaperones may be needed indirectly to relieve occlusion of the RNA-binding site by this domain. Inhibited by several reverse-transcriptase inhibitors: Lamivudine, Adefovir and Entecavir. In terms of biological role, multifunctional enzyme that converts the viral RNA genome into dsDNA in viral cytoplasmic capsids. This enzyme displays a DNA polymerase activity that can copy either DNA or RNA templates, and a ribonuclease H (RNase H) activity that cleaves the RNA strand of RNA-DNA heteroduplexes in a partially processive 3'- to 5'-endonucleasic mode. Neo-synthesized pregenomic RNA (pgRNA) are encapsidated together with the P protein, and reverse-transcribed inside the nucleocapsid. Initiation of reverse-transcription occurs first by binding the epsilon loop on the pgRNA genome, and is initiated by protein priming, thereby the 5'-end of (-)DNA is covalently linked to P protein. Partial (+)DNA is synthesized from the (-)DNA template and generates the relaxed circular DNA (RC-DNA) genome. After budding and infection, the RC-DNA migrates in the nucleus, and is converted into a plasmid-like covalently closed circular DNA (cccDNA). The activity of P protein does not seem to be necessary for cccDNA generation, and is presumably released from (+)DNA by host nuclear DNA repair machinery. The polypeptide is Protein P (Hepatitis B virus genotype B2 (isolate Vietnam/16091/1992) (HBV-B)).